The following is a 319-amino-acid chain: COP9 signalosome complex subunit 6 (319 aa).

Positions 33-166 (VALHPLVILN…VSVYESVIDI (134 aa)) constitute an MPN domain.

The protein belongs to the peptidase M67A family. CSN6 subfamily. Component of the CSN complex, probably composed of cops1, cops2, cops3, cops4, cops5, cops6, cops7, cops8 and cops9.

Its subcellular location is the cytoplasm. The protein resides in the nucleus. Component of the COP9 signalosome complex (CSN), a complex involved in various cellular and developmental processes. The CSN complex is an essential regulator of the ubiquitin (Ubl) conjugation pathway by mediating the deneddylation of the cullin subunits of E3 ligase complexes, leading to modify the Ubl ligase activity. This Xenopus tropicalis (Western clawed frog) protein is COP9 signalosome complex subunit 6 (cops6).